A 29-amino-acid polypeptide reads, in one-letter code: Trypsin inhibitor 1 (29 aa).

3 disulfides stabilise this stretch: Cys-3–Cys-20, Cys-10–Cys-22, and Cys-16–Cys-28.

It belongs to the protease inhibitor I7 (squash-type serine protease inhibitor) family.

The protein resides in the secreted. Its function is as follows. Inhibits trypsin. The polypeptide is Trypsin inhibitor 1 (Luffa aegyptiaca (Sponge gourd)).